A 121-amino-acid chain; its full sequence is Non-specific lipid-transfer protein 9 (121 aa).

The N-terminal stretch at 1–27 (MRKSISIAFVIAITIFMSHLNVFTVYS) is a signal peptide. Cystine bridges form between Cys31-Cys80, Cys41-Cys57, Cys58-Cys102, and Cys78-Cys116.

It belongs to the plant LTP family.

Functionally, plant non-specific lipid-transfer proteins transfer phospholipids as well as galactolipids across membranes. May play a role in wax or cutin deposition in the cell walls of expanding epidermal cells and certain secretory tissues. In Arabidopsis thaliana (Mouse-ear cress), this protein is Non-specific lipid-transfer protein 9 (LTP9).